Reading from the N-terminus, the 476-residue chain is Cysteine--tRNA ligase (476 aa).

Residue Cys36 coordinates Zn(2+). Residues 38–48 (PTVYDYAHIGN) carry the 'HIGH' region motif. Positions 221, 246, and 250 each coordinate Zn(2+). Residues 278 to 282 (KMSKS) carry the 'KMSKS' region motif. Residue Lys281 participates in ATP binding.

It belongs to the class-I aminoacyl-tRNA synthetase family. As to quaternary structure, monomer. The cofactor is Zn(2+).

The protein resides in the cytoplasm. The enzyme catalyses tRNA(Cys) + L-cysteine + ATP = L-cysteinyl-tRNA(Cys) + AMP + diphosphate. The chain is Cysteine--tRNA ligase from Chlamydia caviae (strain ATCC VR-813 / DSM 19441 / 03DC25 / GPIC) (Chlamydophila caviae).